We begin with the raw amino-acid sequence, 392 residues long: Probable glycerol-3-phosphate dehydrogenase 2 (392 aa).

Residues 42–47, F130, K153, and A196 each bind NAD(+); that span reads GSGNWG. A substrate-binding site is contributed by K153. Catalysis depends on K248, which acts as the Proton acceptor. NAD(+)-binding residues include R312 and Q341. Substrate is bound at residue 312 to 313; that stretch reads RN.

This sequence belongs to the NAD-dependent glycerol-3-phosphate dehydrogenase family. In terms of assembly, homodimer.

The protein resides in the cytoplasm. The enzyme catalyses sn-glycerol 3-phosphate + NAD(+) = dihydroxyacetone phosphate + NADH + H(+). This Caenorhabditis elegans protein is Probable glycerol-3-phosphate dehydrogenase 2 (gpdh-2).